The following is a 157-amino-acid chain: Endoribonuclease YbeY (157 aa).

Zn(2+) contacts are provided by His114, His118, and His124.

Belongs to the endoribonuclease YbeY family. It depends on Zn(2+) as a cofactor.

The protein resides in the cytoplasm. Functionally, single strand-specific metallo-endoribonuclease involved in late-stage 70S ribosome quality control and in maturation of the 3' terminus of the 16S rRNA. The protein is Endoribonuclease YbeY of Salmonella paratyphi A (strain AKU_12601).